We begin with the raw amino-acid sequence, 321 residues long: MEWTQIFIPIVVSFAITVSVMPLFIGYFQMKKQGQVTREDGPTWHSVKTGTPTMGGVVFLVASLITSLAMGLFFHQFTPSLLIILFILVLYGLLGYLDDFIKVFKKRNMGLNSRQKLIGQIFGGLVFYFVYRSEGFSDTLDLFGVAEVPLGIFYGVFIIFWLVGFSNAVNLTDGIDGLVAGLGTISFGTYAIIAWKQQQFDVVIICLSVIGGLIGFFPYNRKPAKIFMGDVGSLALGGLLAAISIILHQEWTLLLIGLVYVCETASVILQVASFKLFGRRIFKMSPIHHHFEMCGWSEWKIDFVFWSVGLICSGITLWILF.

The next 10 helical transmembrane spans lie at 6-26 (IFIP…LFIG), 54-74 (MGGV…GLFF), 77-97 (FTPS…LGYL), 117-137 (LIGQ…EGFS), 143-163 (FGVA…FWLV), 175-195 (IDGL…IIAW), 200-220 (FDVV…FPYN), 226-246 (IFMG…ISII), 251-271 (WTLL…ILQV), and 301-321 (IDFV…WILF).

This sequence belongs to the glycosyltransferase 4 family. MraY subfamily. Mg(2+) serves as cofactor.

It is found in the cell membrane. The enzyme catalyses UDP-N-acetyl-alpha-D-muramoyl-L-alanyl-gamma-D-glutamyl-L-lysyl-D-alanyl-D-alanine + di-trans,octa-cis-undecaprenyl phosphate = Mur2Ac(oyl-L-Ala-gamma-D-Glu-L-Lys-D-Ala-D-Ala)-di-trans,octa-cis-undecaprenyl diphosphate + UMP. Its pathway is cell wall biogenesis; peptidoglycan biosynthesis. Its function is as follows. Catalyzes the initial step of the lipid cycle reactions in the biosynthesis of the cell wall peptidoglycan: transfers peptidoglycan precursor phospho-MurNAc-pentapeptide from UDP-MurNAc-pentapeptide onto the lipid carrier undecaprenyl phosphate, yielding undecaprenyl-pyrophosphoryl-MurNAc-pentapeptide, known as lipid I. This Enterococcus faecalis (strain ATCC 700802 / V583) protein is Phospho-N-acetylmuramoyl-pentapeptide-transferase.